A 92-amino-acid polypeptide reads, in one-letter code: Putative septation protein SpoVG (92 aa).

It belongs to the SpoVG family.

Its function is as follows. Could be involved in septation. The protein is Putative septation protein SpoVG of Thermoanaerobacter pseudethanolicus (strain ATCC 33223 / 39E) (Clostridium thermohydrosulfuricum).